The sequence spans 1342 residues: MVYSYTEKKRIRKDFGKRPQVLDVPYLLSIQLDSFQKFIEQDPEGQCGLEAAFRSVFPIQSYSGNSELQYVSYRLGEPVFDVQECQIRGVTYSAPLRVKLRLVIYEREAPEGTVKDIKEQEVYMGEIPLMTDNGTFVINGTERVIVSQLHRSPGVFFDSDKGKTHSSGKVLYNARIIPYRGSWLDFEFDPKDNLFVRIDRRRKLPATIILRALNYTTEQILDLFFEKVVFEIRDNKLQMELIPERLRGETASFDIEANGKVYVEKGRRITARHIRQLEKDDIKHIEVPVEYIAGKVVSKDYVDESTGELICAANMELSLDLLAKLSQSGHKRIETLFTNDLDHGPYISETVRVDPTNDRLSALVEIYRMMRPGEPPTREAAESLFENLFFSEDRYDLSAVGRMKFNRSLLRDEIEGSGILSKDDIIDVMKKLIDIRNGKGEVDDIDHLGNRRIRSVGEMAENQFRVGLVRVERAVKERLSLGDLDTLMPQDMINAKPISAAVKEFFGSSQLSQFMDQNNPLSEITHKRRISALGPGGLTRERAGFEVRDVHPTHYGRVCPIETPEGPNIGLINSLSVYAQTNEYGFLETPYRRVVDGVVTDEIHYLSAIEEGNYVIAQANSNLDDEGHFVEDLVTCRSKGESSLFSRDQVDYMDVSTQQVVSVGASLIPFLEHDDANRALMGANMQRQAVPTLRADKPLVGTGMERAVAVDSGVTAVAKRGGTVQYVDASRIVIKVNEDEMYPGEAGIDIYNLTKYTRSNQNTCINQMPCVSLGEPVERGDVLADGPSTDLGELALGQNMRVAFMPWNGYNFEDSILVSERVVQEDRFTTIHIQELACVSRDTKLGPEEITADIPNVGEAALSKLDESGIVYIGAEVTGGDILVGKVTPKGETQLTPEEKLLRAIFGEKASDVKDSSLRVPNGVSGTVIDVQVFTRDGVEKDKRALEIEEMQLKQAKKDLSEELQILEAGLFSRIRAVLVSGGVEAEKLDKLPRDRWLELGLTDEEKQNQLEQLAEQYDELKHEFEKKLEAKRRKITKGDDLAPGVLKIVKVYLAVKRRIQPGDKMAGRHGNKGVISKINPIEDMPYDENGTPVDIVLNPLGVPSRMNIGQILETHLGMAAKGIGDKINAMLKQQQEVAKLREFIQRAYDLGADVRQKVDLSTFSDDEVLRLAENLRKGMPIATPVFDGAKEAEIKELLKLGDLPTSGQITLFDGRTGEQFERPVTVGYMYMLKLNHLVDDKMHARSTGSYSLVTQQPLGGKAQFGGQRFGEMEVWALEAYGAAYTLQEMLTVKSDDVNGRTKMYKNIVDGNHQMEPGMPESFNVLLKEIRSLGINIELEDE.

Belongs to the RNA polymerase beta chain family. In terms of assembly, the RNAP catalytic core consists of 2 alpha, 1 beta, 1 beta' and 1 omega subunit. When a sigma factor is associated with the core the holoenzyme is formed, which can initiate transcription.

The catalysed reaction is RNA(n) + a ribonucleoside 5'-triphosphate = RNA(n+1) + diphosphate. DNA-dependent RNA polymerase catalyzes the transcription of DNA into RNA using the four ribonucleoside triphosphates as substrates. This Salmonella gallinarum (strain 287/91 / NCTC 13346) protein is DNA-directed RNA polymerase subunit beta.